We begin with the raw amino-acid sequence, 150 residues long: CCAAT/enhancer-binding protein gamma (150 aa).

Lys-3 participates in a covalent cross-link: Glycyl lysine isopeptide (Lys-Gly) (interchain with G-Cter in SUMO2). The tract at residues 27 to 94 is disordered; that stretch reads GLQQVPQLVP…QKAQDTLQRV (68 aa). A compositionally biased stretch (low complexity) spans 28 to 37; that stretch reads LQQVPQLVPA. The span at 56–72 shows a compositional bias: basic and acidic residues; it reads SPMDRNSDEYRQRRERN. Positions 62–125 constitute a bZIP domain; sequence SDEYRQRRER…SVLKDLFLEH (64 aa). Residues 66 to 93 form a basic motif region; the sequence is RQRRERNNMAVKKSRLKSKQKAQDTLQR. The interval 97–118 is leucine-zipper; it reads LKEENERLEAKIKLLTKELSVL. The tract at residues 129–150 is disordered; that stretch reads LADNVQPISTETTATNSDNPGQ. Residues 134 to 150 are compositionally biased toward polar residues; that stretch reads QPISTETTATNSDNPGQ.

This sequence belongs to the bZIP family. C/EBP subfamily. Binds DNA as a dimer and can form stable heterodimers with CEBPA. Can form stable heterodimers with CEBPB. Interacts with ZNF638; this interaction increases transcriptional activation. As to expression, ubiquitous.

It localises to the nucleus. Transcription factor that binds to the promoter and the enhancer regions of target genes. Binds to the promoter and the enhancer of the immunoglobulin heavy chain. Binds to GPE1, a cis-acting element in the G-CSF gene promoter. Binds to the enhancer element PRE-I (positive regulatory element-I) of the IL-4 gene. Binds to the promoter and the enhancer of the alpha-1-fetoprotein gene. This Mus musculus (Mouse) protein is CCAAT/enhancer-binding protein gamma (Cebpg).